The following is a 287-amino-acid chain: Pyridoxal 5'-phosphate synthase subunit PdxS (287 aa).

D21 lines the D-ribose 5-phosphate pocket. K78 (schiff-base intermediate with D-ribose 5-phosphate) is an active-site residue. G150 contacts D-ribose 5-phosphate. A D-glyceraldehyde 3-phosphate-binding site is contributed by R162. Residues G211 and 232–233 contribute to the D-ribose 5-phosphate site; that span reads GS.

This sequence belongs to the PdxS/SNZ family. In terms of assembly, in the presence of PdxT, forms a dodecamer of heterodimers.

It carries out the reaction aldehydo-D-ribose 5-phosphate + D-glyceraldehyde 3-phosphate + L-glutamine = pyridoxal 5'-phosphate + L-glutamate + phosphate + 3 H2O + H(+). It participates in cofactor biosynthesis; pyridoxal 5'-phosphate biosynthesis. In terms of biological role, catalyzes the formation of pyridoxal 5'-phosphate from ribose 5-phosphate (RBP), glyceraldehyde 3-phosphate (G3P) and ammonia. The ammonia is provided by the PdxT subunit. Can also use ribulose 5-phosphate and dihydroxyacetone phosphate as substrates, resulting from enzyme-catalyzed isomerization of RBP and G3P, respectively. The chain is Pyridoxal 5'-phosphate synthase subunit PdxS from Francisella philomiragia subsp. philomiragia (strain ATCC 25017 / CCUG 19701 / FSC 153 / O#319-036).